We begin with the raw amino-acid sequence, 253 residues long: rRNA adenine N-6-methyltransferase (253 aa).

The S-adenosyl-L-methionine site is built by Asn-14, Leu-16, Gly-40, Glu-61, Asp-85, and Asn-101. The disordered stretch occupies residues Cys-229 to Arg-253. Residues Thr-244–Arg-253 are compositionally biased toward polar residues.

Belongs to the class I-like SAM-binding methyltransferase superfamily. rRNA adenine N(6)-methyltransferase family.

Functionally, involved in erythromycin resistance. The protein is rRNA adenine N-6-methyltransferase (ermA) of Corynebacterium diphtheriae.